The sequence spans 620 residues: Chaperone protein HscA homolog (620 aa).

Belongs to the heat shock protein 70 family.

In terms of biological role, chaperone involved in the maturation of iron-sulfur cluster-containing proteins. Has a low intrinsic ATPase activity which is markedly stimulated by HscB. The sequence is that of Chaperone protein HscA homolog from Neisseria meningitidis serogroup B (strain ATCC BAA-335 / MC58).